The following is a 596-amino-acid chain: Chaperonin 60 subunit beta 2, chloroplastic (596 aa).

A chloroplast-targeting transit peptide spans 1-50 (MASTFTATSSLGSLLAPNAIKLSSATSISSSSFGRRHNVCVRRSRPAIVC). Phosphoserine is present on residues serine 97 and serine 474. A coiled-coil region spans residues 388–489 (TQEAVNKRVV…KDTLENDEEK (102 aa)).

The protein belongs to the chaperonin (HSP60) family. Part of the Cpn60 complex composed of 7 alpha and 7 beta subunits. Can also form a complex composed of 14 beta subunits only. Both complexes show ATPase activity. The Cpn60 complex interacts with the Cpn10 complex. Interacts with RAB during heat stress.

The protein localises to the plastid. Its subcellular location is the chloroplast stroma. Involved in protein assisted folding. The protein is Chaperonin 60 subunit beta 2, chloroplastic (CPN60B2) of Arabidopsis thaliana (Mouse-ear cress).